We begin with the raw amino-acid sequence, 985 residues long: Serine/threonine-protein kinase N2 (985 aa).

The REM-1 1 domain occupies 33–109 (KLDFSDTIVQ…LQELNAHIVV (77 aa)). Lys-77 is subject to N6-acetyllysine. Position 110 is a phosphoserine (Ser-110). The segment at 111 to 136 (DPEDYTDCPRTPDTPNSDSRSSTSNN) is disordered. Residues Thr-121 and Thr-124 each carry the phosphothreonine modification. Residues 121 to 136 (TPDTPNSDSRSSTSNN) show a composition bias toward low complexity. REM-1 domains lie at 121–204 (TPDT…TNEL) and 207–286 (DNAK…ELPK). Phosphoserine is present on residues Ser-303, Ser-307, Ser-361, and Ser-363. The disordered stretch occupies residues 352 to 383 (ATSVALPGWSPSENRSSFMSRTSKSKSGSSRN). The C2 domain maps to 354–474 (SVALPGWSPS…LYLEPQGTLF (121 aa)). Residues 366–382 (RSSFMSRTSKSKSGSSR) show a composition bias toward low complexity. The necessary to rescue apical junction formation stretch occupies residues 383–464 (NLLKTDDLSN…FLDNQRHGMA (82 aa)). Ser-536, Ser-584, Ser-621, and Ser-632 each carry phosphoserine. Positions 570–590 (DLEPEAPPAPPRASSLGEIDD) are disordered. The Protein kinase domain occupies 658 to 917 (FRCCAVLGRG…AEDVKKHPFF (260 aa)). ATP is bound by residues 664 to 672 (LGRGHFGKV) and Lys-687. Asp-783 acts as the Proton acceptor in catalysis. The residue at position 817 (Thr-817) is a Phosphothreonine; by PDPK1. The interval 918–978 (RLTDWSALLD…EEEQEMFRDF (61 aa)) is necessary for the catalytic activity. One can recognise an AGC-kinase C-terminal domain in the interval 918 to 985 (RLTDWSALLD…RDFDYVADWC (68 aa)). Ser-953 carries the post-translational modification Phosphoserine. Phosphothreonine is present on Thr-959. The interval 979-985 (DYVADWC) is negatively regulates the responsiveness of the catalytic activity by cardiolipin and is required for optimal activation by the GTP-bound RhoA.

It belongs to the protein kinase superfamily. AGC Ser/Thr protein kinase family. PKC subfamily. As to quaternary structure, interacts (via the REM repeats) with RHOA (GTP-bound form preferentially) and interacts (via the REM repeats) with RAC1 (GTP-bound form preferentially); the interactions induce its autophosphorylation. Interacts with RHOC. Interacts with NCK1 (via SH3 domains) and NCK2. Interacts with CD44. Interacts (via C-terminal kinase domain) with PDPK1; the interaction stimulates PDPK1 kinase activity. Interacts with MAP3K2; the interaction activates PRK2 kinase activity in a MAP3K2-independent kinase activity. Interacts (via C-terminal domain) with AKT1; the interaction occurs with the C-terminal cleavage product of PRK2 in apoptotic cells. Interacts (via C-terminus) with PTPN13 (via PDZ 3 domain). Interacts with CDK10. Phosphorylated during mitosis. Autophosphorylated. Phosphorylated. Binding to Rho and Rac promotes autophosphorylation and phosphorylation on serine and threonine residues. Phosphorylated by CDK10. Post-translationally, proteolytically cleaved by caspase-3 during the induction of apoptotic cell death. Activated by limited proteolysis with trypsin. In terms of tissue distribution, expressed in liver (at protein level).

Its subcellular location is the cytoplasm. The protein resides in the nucleus. The protein localises to the membrane. It localises to the cell projection. It is found in the lamellipodium. Its subcellular location is the cytoskeleton. The protein resides in the cleavage furrow. The protein localises to the midbody. It localises to the cell junction. It carries out the reaction L-seryl-[protein] + ATP = O-phospho-L-seryl-[protein] + ADP + H(+). The enzyme catalyses L-threonyl-[protein] + ATP = O-phospho-L-threonyl-[protein] + ADP + H(+). Kinase activity is activated upon binding to GTP-bound Rho1/Rac1 GTPases. Activated by caspase-3 (CASP3) cleavage during apoptosis. Activated by lipids, particularly cardiolipin and to a lesser extent by other acidic phospholipids and unsaturated fatty acids. Two specific sites, Thr-817 (activation loop of the kinase domain) and Thr-959 (turn motif), need to be phosphorylated for its full activation. Functionally, PKC-related serine/threonine-protein kinase and Rho/Rac effector protein that participates in specific signal transduction responses in the cell. Plays a role in the regulation of cell cycle progression, actin cytoskeleton assembly, cell migration, cell adhesion, tumor cell invasion and transcription activation signaling processes. Phosphorylates CTTN in hyaluronan-induced astrocytes and hence decreases CTTN ability to associate with filamentous actin. Phosphorylates HDAC5, therefore lead to impair HDAC5 import. Direct RhoA target required for the regulation of the maturation of primordial junctions into apical junction formation in bronchial epithelial cells. Required for G2/M phases of the cell cycle progression and abscission during cytokinesis in a ECT2-dependent manner. Stimulates FYN kinase activity that is required for establishment of skin cell-cell adhesion during keratinocytes differentiation. Regulates epithelial bladder cells speed and direction of movement during cell migration and tumor cell invasion. Inhibits Akt pro-survival-induced kinase activity. Mediates Rho protein-induced transcriptional activation via the c-fos serum response factor (SRF). Involved in the negative regulation of ciliogenesis. This Rattus norvegicus (Rat) protein is Serine/threonine-protein kinase N2 (Pkn2).